The primary structure comprises 261 residues: Calbindin (261 aa).

An N-acetylalanine modification is found at Ala2. The interaction with RANBP9 stretch occupies residues 2–7 (AESHLQ). 5 EF-hand domains span residues 11–46 (ITAS…LQQA), 53–88 (ELSP…EENF), 98–133 (KSCE…LLEK), 142–177 (KLAE…QENF), and 186–221 (MCGK…LCEK). The Ca(2+) site is built by Asp24, Asp26, Ser28, Tyr30, and Glu35. Ca(2+)-binding residues include Asp111, Asp113, Glu122, Asp155, Asn157, Asp159, Lys161, Glu166, Asp199, Asp201, Asn203, Tyr205, and Glu210.

It belongs to the calbindin family. As to quaternary structure, interacts with RANBP9.

Buffers cytosolic calcium. May stimulate a membrane Ca(2+)-ATPase and a 3',5'-cyclic nucleotide phosphodiesterase. This is Calbindin (CALB1) from Pongo abelii (Sumatran orangutan).